A 255-amino-acid chain; its full sequence is Folate receptor alpha (255 aa).

A signal peptide spans 1–24 (MAHLMTVQLLLLVMWMAECAQSRA). 8 disulfide bridges follow: Cys-35–Cys-63, Cys-55–Cys-103, Cys-64–Cys-107, Cys-87–Cys-173, Cys-94–Cys-144, Cys-133–Cys-207, Cys-137–Cys-187, and Cys-150–Cys-167. Asn-67 carries an N-linked (GlcNAc...) asparagine glycan. Residues Asp-101, Tyr-105, 122–126 (WRKER), 155–160 (HKGWNW), and Ser-194 contribute to the folate site. Asn-159 carries an N-linked (GlcNAc...) asparagine glycan. Asn-199 is a glycosylation site (N-linked (GlcNAc...) asparagine). A lipid anchor (GPI-anchor amidated serine) is attached at Ser-232. Residues 233 to 255 (GAGFHGTWPLLCSLSLVLLWVIS) constitute a propeptide, removed in mature form.

Belongs to the folate receptor family. Post-translationally, the secreted form is derived from the membrane-bound form either by cleavage of the GPI anchor, or/and by proteolysis catalyzed by a metalloprotease. In terms of tissue distribution, detected in kidney proximal tubules (at protein level).

The protein resides in the cell membrane. It localises to the apical cell membrane. Its subcellular location is the basolateral cell membrane. It is found in the secreted. The protein localises to the cytoplasmic vesicle. The protein resides in the clathrin-coated vesicle. It localises to the endosome. Its function is as follows. Binds to folate and reduced folic acid derivatives and mediates delivery of 5-methyltetrahydrofolate and folate analogs into the interior of cells. Has high affinity for folate and folic acid analogs at neutral pH. Exposure to slightly acidic pH after receptor endocytosis triggers a conformation change that strongly reduces its affinity for folates and mediates their release. Required for normal embryonic development and normal cell proliferation. Required for renal folate reabsorption. The sequence is that of Folate receptor alpha (Folr1) from Mus musculus (Mouse).